We begin with the raw amino-acid sequence, 516 residues long: Maturase K (516 aa).

It belongs to the intron maturase 2 family. MatK subfamily.

Its subcellular location is the plastid. It localises to the chloroplast. In terms of biological role, usually encoded in the trnK tRNA gene intron. Probably assists in splicing its own and other chloroplast group II introns. The protein is Maturase K of Chara vulgaris (Common stonewort).